A 181-amino-acid chain; its full sequence is Protein Abitram (181 aa).

This sequence belongs to the ABITRAM family. As to quaternary structure, interacts with F-actin. Interacts with G-actin.

The protein localises to the nucleus speckle. The protein resides in the cell projection. It is found in the lamellipodium. Its subcellular location is the nucleus. It localises to the growth cone. The protein localises to the dendrite. In terms of biological role, actin-binding protein that regulates actin polymerization, filopodia dynamics and increases the branching of proximal dendrites of developing neurons. The chain is Protein Abitram from Homo sapiens (Human).